The primary structure comprises 463 residues: Metacaspase-1 (463 aa).

The segment at 1–149 (MSWNQYPGGG…PQLQGQGGQS (149 aa)) is disordered. Residues 7 to 18 (PGGGHHQQGGYG) show a composition bias toward gly residues. Pro residues predominate over residues 20–56 (RPPPPQWAQQGPPPPPNMGYRPPPPPQAYYNNPPPPQ). The span at 57-83 (QYQRPAPQQNGYQQGGYQQQQQSQGNY) shows a compositional bias: low complexity. Active-site residues include His247 and Cys309.

This sequence belongs to the peptidase C14B family.

In terms of biological role, involved in cell death (apoptosis). The chain is Metacaspase-1 (MCA1) from Cryptococcus neoformans var. neoformans serotype D (strain B-3501A) (Filobasidiella neoformans).